The chain runs to 350 residues: Transmembrane protein 185B (350 aa).

Helical transmembrane passes span 16–36, 41–61, 81–101, 111–131, 168–188, 211–231, and 240–260; these read LIYT…DGII, WAVF…ASVG, FKAM…EVLV, FWLL…AACV, WLVV…VVLY, VTMA…EVLL, and TFSY…LMAT.

It belongs to the TMEM185 family.

It localises to the membrane. The protein is Transmembrane protein 185B (TMEM185B) of Homo sapiens (Human).